We begin with the raw amino-acid sequence, 346 residues long: Putative serine/threonine-protein kinase K06H7.1 (346 aa).

The 268-residue stretch at 20–287 (YKVVQKLGEG…KLFKLLEDVM (268 aa)) folds into the Protein kinase domain. ATP-binding positions include 26 to 34 (LGEGGCGSV) and K50. D141 acts as the Proton acceptor in catalysis. The tract at residues 302–326 (PEKKKNPASQGNKFGLGKKGTKESG) is disordered.

Belongs to the protein kinase superfamily. Ser/Thr protein kinase family.

The enzyme catalyses L-seryl-[protein] + ATP = O-phospho-L-seryl-[protein] + ADP + H(+). It catalyses the reaction L-threonyl-[protein] + ATP = O-phospho-L-threonyl-[protein] + ADP + H(+). This is Putative serine/threonine-protein kinase K06H7.1 from Caenorhabditis elegans.